A 405-amino-acid chain; its full sequence is Argininosuccinate synthase (405 aa).

ATP is bound by residues 10–18 and alanine 38; that span reads AYSGGVDTS. An L-citrulline-binding site is contributed by tyrosine 89. Glycine 119 serves as a coordination point for ATP. Threonine 121, asparagine 125, and aspartate 126 together coordinate L-aspartate. Residue asparagine 125 participates in L-citrulline binding. Residues arginine 129, serine 177, serine 186, glutamate 262, and tyrosine 274 each contribute to the L-citrulline site.

It belongs to the argininosuccinate synthase family. Type 1 subfamily. In terms of assembly, homotetramer.

It localises to the cytoplasm. It carries out the reaction L-citrulline + L-aspartate + ATP = 2-(N(omega)-L-arginino)succinate + AMP + diphosphate + H(+). It functions in the pathway amino-acid biosynthesis; L-arginine biosynthesis; L-arginine from L-ornithine and carbamoyl phosphate: step 2/3. The chain is Argininosuccinate synthase from Synechococcus sp. (strain RCC307).